Reading from the N-terminus, the 262-residue chain is Leucine-rich repeat-containing protein 18 (262 aa).

LRR repeat units lie at residues 28–49 (GRKRLDLSKMGITTFPKCILRL), 51–72 (DIDELDLSRNMIRKIPDSIAKF), 74–95 (NLRWLDLHSNYIDKLPESIGQM), 97–118 (SLLFLNVSNNRLTTNGLPVELN), 122–144 (NIRTVNLGLNHLDSVPTTLGALK), 145–167 (ELHEVGLHDNLLTTIPASIAKLP), and 168–189 (KLKKLNIKRNPFPNADESEMFV).

In terms of tissue distribution, exclusively expressed in spermatocytes and roud spermatids within seminiferous tubules during spermatogenesis.

It is found in the cytoplasm. Functionally, may be involved in the regulation of spermatogenesis and sperm maturation. This Mus musculus (Mouse) protein is Leucine-rich repeat-containing protein 18 (Lrrc18).